The chain runs to 78 residues: UPF0335 protein A1C_00850 (78 aa).

The protein belongs to the UPF0335 family.

In Rickettsia akari (strain Hartford), this protein is UPF0335 protein A1C_00850.